The chain runs to 304 residues: Glutaminase (304 aa).

Residues Ser63, Asn113, Glu157, Asn164, Tyr188, Tyr240, and Val258 each coordinate substrate.

It belongs to the glutaminase family. Homotetramer.

It carries out the reaction L-glutamine + H2O = L-glutamate + NH4(+). This Christiangramia forsetii (strain DSM 17595 / CGMCC 1.15422 / KT0803) (Gramella forsetii) protein is Glutaminase.